We begin with the raw amino-acid sequence, 227 residues long: Prolactin (227 aa).

Positions 1-28 (MNIKGSPWKGSLLLLLVSNLLLCQNVAP) are cleaved as a signal peptide. A disulfide bridge connects residues cysteine 32 and cysteine 39. Serine 54 carries the phosphoserine modification. N-linked (GlcNAc...) asparagine glycosylation is present at asparagine 59. Residues serine 62 and serine 118 each carry the phosphoserine modification. 2 disulfides stabilise this stretch: cysteine 86-cysteine 202 and cysteine 219-cysteine 227.

The protein belongs to the somatotropin/prolactin family. In terms of assembly, interacts with PRLR.

It localises to the secreted. Functionally, prolactin acts primarily on the mammary gland by promoting lactation. The protein is Prolactin (PRL) of Macaca mulatta (Rhesus macaque).